Reading from the N-terminus, the 306-residue chain is UPF0282 protein Pars_1056 (306 aa).

It belongs to the UPF0282 family.

This is UPF0282 protein Pars_1056 from Pyrobaculum arsenaticum (strain DSM 13514 / JCM 11321 / PZ6).